Reading from the N-terminus, the 396-residue chain is Tryptophan synthase beta chain (396 aa).

Residue K88 is modified to N6-(pyridoxal phosphate)lysine.

The protein belongs to the TrpB family. Tetramer of two alpha and two beta chains. Requires pyridoxal 5'-phosphate as cofactor.

The enzyme catalyses (1S,2R)-1-C-(indol-3-yl)glycerol 3-phosphate + L-serine = D-glyceraldehyde 3-phosphate + L-tryptophan + H2O. Its pathway is amino-acid biosynthesis; L-tryptophan biosynthesis; L-tryptophan from chorismate: step 5/5. The beta subunit is responsible for the synthesis of L-tryptophan from indole and L-serine. The polypeptide is Tryptophan synthase beta chain (Shewanella sp. (strain MR-7)).